The sequence spans 118 residues: Large ribosomal subunit protein bL17 (118 aa).

The protein belongs to the bacterial ribosomal protein bL17 family. As to quaternary structure, part of the 50S ribosomal subunit. Contacts protein L32.

In Phytoplasma mali (strain AT), this protein is Large ribosomal subunit protein bL17.